The primary structure comprises 453 residues: Putative receptor-like protein kinase At2g30940 (453 aa).

A helical transmembrane segment spans residues Ala60–Phe80. Thr155 bears the Phosphothreonine mark. One can recognise a Protein kinase domain in the interval Phe166–Leu428. Residues Ile172 to Val180 and Lys194 each bind ATP. Position 240 is a phosphotyrosine (Tyr240). Asp293 functions as the Proton acceptor in the catalytic mechanism. Ser297 is modified (phosphoserine). Phosphothreonine is present on Thr322.

It belongs to the protein kinase superfamily.

The protein resides in the cell membrane. The enzyme catalyses L-seryl-[protein] + ATP = O-phospho-L-seryl-[protein] + ADP + H(+). It catalyses the reaction L-threonyl-[protein] + ATP = O-phospho-L-threonyl-[protein] + ADP + H(+). In Arabidopsis thaliana (Mouse-ear cress), this protein is Putative receptor-like protein kinase At2g30940.